The following is an 89-amino-acid chain: Small ribosomal subunit protein uS15 (89 aa).

It belongs to the universal ribosomal protein uS15 family. As to quaternary structure, part of the 30S ribosomal subunit. Forms a bridge to the 50S subunit in the 70S ribosome, contacting the 23S rRNA.

In terms of biological role, one of the primary rRNA binding proteins, it binds directly to 16S rRNA where it helps nucleate assembly of the platform of the 30S subunit by binding and bridging several RNA helices of the 16S rRNA. Its function is as follows. Forms an intersubunit bridge (bridge B4) with the 23S rRNA of the 50S subunit in the ribosome. The polypeptide is Small ribosomal subunit protein uS15 (Lactobacillus gasseri (strain ATCC 33323 / DSM 20243 / BCRC 14619 / CIP 102991 / JCM 1131 / KCTC 3163 / NCIMB 11718 / NCTC 13722 / AM63)).